A 74-amino-acid polypeptide reads, in one-letter code: Large ribosomal subunit protein uL29 (74 aa).

The protein belongs to the universal ribosomal protein uL29 family.

The polypeptide is Large ribosomal subunit protein uL29 (Nostoc sp. (strain PCC 7120 / SAG 25.82 / UTEX 2576)).